We begin with the raw amino-acid sequence, 373 residues long: Alanine dehydrogenase (373 aa).

Substrate contacts are provided by R15 and K74. Catalysis depends on H95, which acts as the Proton donor/acceptor. Residues S133, 177–178 (QA), D197, S219, 238–239 (VL), 266–269 (IAID), and 298–301 (VANM) contribute to the NAD(+) site. The Proton donor/acceptor role is filled by D269.

It belongs to the AlaDH/PNT family. Homohexamer. Trimer of dimer.

It catalyses the reaction L-alanine + NAD(+) + H2O = pyruvate + NH4(+) + NADH + H(+). It functions in the pathway amino-acid degradation; L-alanine degradation via dehydrogenase pathway; NH(3) and pyruvate from L-alanine: step 1/1. In terms of biological role, catalyzes the reversible reductive amination of pyruvate to L-alanine. May play a role in cell wall synthesis as L-alanine is an important constituent of the peptidoglycan layer. The sequence is that of Alanine dehydrogenase (ald) from Staphylococcus haemolyticus (strain JCSC1435).